We begin with the raw amino-acid sequence, 523 residues long: 2-isopropylmalate synthase (523 aa).

The region spanning 5–267 is the Pyruvate carboxyltransferase domain; the sequence is VIIFDTTLRD…HTAINHQEIW (263 aa). Mn(2+) contacts are provided by aspartate 14, histidine 202, histidine 204, and asparagine 238. The segment at 392 to 523 is regulatory domain; that stretch reads RLDYFSVQSG…QHNENNKETV (132 aa).

This sequence belongs to the alpha-IPM synthase/homocitrate synthase family. LeuA type 1 subfamily. Homodimer. Mn(2+) is required as a cofactor.

The protein resides in the cytoplasm. The enzyme catalyses 3-methyl-2-oxobutanoate + acetyl-CoA + H2O = (2S)-2-isopropylmalate + CoA + H(+). Its pathway is amino-acid biosynthesis; L-leucine biosynthesis; L-leucine from 3-methyl-2-oxobutanoate: step 1/4. Functionally, catalyzes the condensation of the acetyl group of acetyl-CoA with 3-methyl-2-oxobutanoate (2-ketoisovalerate) to form 3-carboxy-3-hydroxy-4-methylpentanoate (2-isopropylmalate). The protein is 2-isopropylmalate synthase of Escherichia coli O157:H7.